Here is a 186-residue protein sequence, read N- to C-terminus: MSKKYDKLGNDVFNKVEKINSELFTLTYGALVTQLIKDYEDIEQVNIKLEQMGYNIGIRLIEEFLAKSGIGRCSDFIETAEVIAKVGFKMFLGVNAHVGDWDANRKEFHLTIEDNPLIDFVELPDQYKHKLYYSNILCGVMRGALEMVQMKVKCTFVKCTLSDDSTSEIKVVLEEVLSDMIPVGYD.

Belongs to the TRAPP small subunits family. BET3 subfamily. Homodimer. Part of the multisubunit TRAPP (transport protein particle) complex.

It is found in the golgi apparatus. The protein localises to the cis-Golgi network. It localises to the endoplasmic reticulum. Functionally, may play a role in vesicular transport from endoplasmic reticulum to Golgi. The chain is Trafficking protein particle complex subunit 3 (trappc3) from Dictyostelium discoideum (Social amoeba).